The sequence spans 443 residues: Nuclear pore complex-interacting protein family member B15 (443 aa).

The first 18 residues, 1-18, serve as a signal peptide directing secretion; sequence MRLRFWLLIWLLLGFISH. N-linked (GlcNAc...) asparagine glycosylation occurs at Asn-111. Disordered regions lie at residues 242-262 and 330-413; these read RMGR…NSLS and SPLP…TRHC. A compositionally biased stretch (polar residues) spans 252–262; sequence QQHSITDNSLS. Residues 351–393 are compositionally biased toward basic and acidic residues; the sequence is EAEKPPKPKRWRVDEVEQSPKPKRRRADEVEQSPKPKRQREAE. The span at 399-412 shows a compositional bias: basic residues; that stretch reads KPKRRRLSKLRTRH.

It belongs to the NPIP family.

The protein localises to the secreted. This Homo sapiens (Human) protein is Nuclear pore complex-interacting protein family member B15 (NPIPB15).